The primary structure comprises 123 residues: Large ribosomal subunit protein uL18 (123 aa).

Belongs to the universal ribosomal protein uL18 family. As to quaternary structure, part of the 50S ribosomal subunit; part of the 5S rRNA/L5/L18/L25 subcomplex. Contacts the 5S and 23S rRNAs.

Its function is as follows. This is one of the proteins that bind and probably mediate the attachment of the 5S RNA into the large ribosomal subunit, where it forms part of the central protuberance. This chain is Large ribosomal subunit protein uL18, found in Wolbachia sp. subsp. Brugia malayi (strain TRS).